The sequence spans 448 residues: ATP-dependent protease ATPase subunit HslU (448 aa).

Residues I18, 60 to 65 (GVGKTE), D261, E326, and R398 contribute to the ATP site.

Belongs to the ClpX chaperone family. HslU subfamily. In terms of assembly, a double ring-shaped homohexamer of HslV is capped on each side by a ring-shaped HslU homohexamer. The assembly of the HslU/HslV complex is dependent on binding of ATP.

It localises to the cytoplasm. In terms of biological role, ATPase subunit of a proteasome-like degradation complex; this subunit has chaperone activity. The binding of ATP and its subsequent hydrolysis by HslU are essential for unfolding of protein substrates subsequently hydrolyzed by HslV. HslU recognizes the N-terminal part of its protein substrates and unfolds these before they are guided to HslV for hydrolysis. The polypeptide is ATP-dependent protease ATPase subunit HslU (Paraburkholderia xenovorans (strain LB400)).